The sequence spans 117 residues: uncharacterized protein (117 aa).

It is found in the plastid. The protein localises to the chloroplast. This is an uncharacterized protein from Chlamydomonas reinhardtii (Chlamydomonas smithii).